We begin with the raw amino-acid sequence, 354 residues long: Glycine betaine/proline betaine transport system permease protein ProW (354 aa).

The tract at residues 1-28 (MADQTNPWDTAQVADTTTQTADAWGTPA) is disordered. Residues 1 to 99 (MADQTNPWDT…VDYILNGFQQ (99 aa)) are Cytoplasmic-facing. Low complexity predominate over residues 9-23 (DTAQVADTTTQTADA). A helical transmembrane segment spans residues 100–120 (LLLGMPAPVAIILFALIAWQV). S121 is a topological domain (periplasmic). Residues 122 to 142 (GVGMGIATLISLIAIGAIGAW) form a helical membrane-spanning segment. Residues 143–148 (SQAMIT) lie on the Cytoplasmic side of the membrane. Residues 145–324 (AMITLALVLT…ILAIILDRLT (180 aa)) enclose the ABC transmembrane type-1 domain. Residues 149–169 (LALVLTALLFCVVIGLPMGIW) traverse the membrane as a helical segment. Topologically, residues 170-198 (LARSPRAAKIVRPLLDAMQTTPAFVYLVP) are periplasmic. A helical membrane pass occupies residues 199-219 (IVMLFGIGNVPGVVVTIIFAL). Over 220–270 (PPIVRLTILGINQVPADLIEASRSFGASPRQMLFKVQLPLAMPTIMAGVNQ) the chain is Cytoplasmic. A helical membrane pass occupies residues 271 to 291 (TLMLALSMVVIASMIAVGGLG). Residues 292–300 (QMVLRGIGR) lie on the Periplasmic side of the membrane. A helical transmembrane segment spans residues 301–321 (LDMGLATVGGVGIVILAIILD). The Cytoplasmic segment spans residues 322 to 354 (RLTQAVGRDSRSRGNRRWYTTGPVGLITRPFVK).

It belongs to the binding-protein-dependent transport system permease family. CysTW subfamily. As to quaternary structure, the complex is composed of two ATP-binding proteins (ProV), two transmembrane proteins (ProW) and a solute-binding protein (ProX).

Its subcellular location is the cell inner membrane. In terms of biological role, part of the ProU ABC transporter complex involved in glycine betaine and proline betaine uptake. Probably responsible for the translocation of the substrate across the membrane. This chain is Glycine betaine/proline betaine transport system permease protein ProW, found in Salmonella typhimurium (strain LT2 / SGSC1412 / ATCC 700720).